The following is a 549-amino-acid chain: Tigger transposable element-derived protein 7 (549 aa).

The 52-residue stretch at methionine 1–isoleucine 52 folds into the HTH psq-type domain. 2 consecutive DNA-binding regions (H-T-H motif) follow at residues leucine 28–asparagine 48 and valine 101–arginine 132. Residues lysine 68 to lysine 139 enclose the HTH CENPB-type domain. In terms of domain architecture, DDE-1 spans leucine 169 to tryptophan 399. Positions phenylalanine 527–histidine 549 are disordered. Over residues serine 540–histidine 549 the composition is skewed to polar residues.

It belongs to the tigger transposable element derived protein family. In terms of tissue distribution, expressed in all tissues tested. Higher expression in testis and ovary.

The protein localises to the nucleus. This is Tigger transposable element-derived protein 7 (TIGD7) from Homo sapiens (Human).